The chain runs to 223 residues: MKPIIPPQNLSELLERANMMAGISLAQIAAHRGITVPKDLKRDKGWVGQLIEMELGATAGSKPEQDFLHLGVELKTIPIDSKGKPLETTYVCVAPLTNIEGLTWQDSLVCHKLQRVLWVPVEGERHIPVGERRVGTPILWEPDQQELALLQQDWEEIMELIALGKVEKLTARHGEVLQLRPKAANSKALTQSIAEDGGLKMTNPRGFYLKTAFTAMLLNKVFG.

This sequence belongs to the MutH family.

The protein localises to the cytoplasm. Sequence-specific endonuclease that cleaves unmethylated GATC sequences. It is involved in DNA mismatch repair. This chain is DNA mismatch repair protein MutH, found in Shewanella sp. (strain MR-7).